Here is a 463-residue protein sequence, read N- to C-terminus: uncharacterized protein (463 aa).

Transmembrane regions (helical) follow at residues 21–40 (DFAC…FFYT), 50–72 (AGTM…GTIV), 84–104 (PYLL…FTTP), 112–132 (LIYA…INVP), 156–176 (LFAN…AAYL), 186–206 (GWQL…IFCF), 237–257 (LVVL…SNSV), 271–291 (LVKW…PFIP), 311–331 (IIGL…ILVC), 334–354 (IAAA…PETI), 367–387 (GLIY…GGVV), and 408–428 (LMGI…LALI).

It belongs to the sodium:galactoside symporter (TC 2.A.2) family.

The protein resides in the cell membrane. This is an uncharacterized protein from Bacillus subtilis (strain 168).